The primary structure comprises 122 residues: Double-headed protease inhibitor, submandibular gland (122 aa).

Kazal-like domains lie at 10–70 (GGRK…ECDI) and 71–121 (ECTQ…QCQS). 6 disulfides stabilise this stretch: C16–C50, C28–C47, C36–C68, C72–C101, C79–C98, and C87–C119.

The protein localises to the secreted. Functionally, this inhibitor is composed of two homologous actively inhibiting halves: one which inhibits trypsin, the other which inhibits elastase. The protein is Double-headed protease inhibitor, submandibular gland of Panthera uncia (Snow leopard).